Consider the following 117-residue polypeptide: Large ribosomal subunit protein bL20c (117 aa).

Belongs to the bacterial ribosomal protein bL20 family.

It localises to the plastid. The protein resides in the chloroplast. In terms of biological role, binds directly to 23S ribosomal RNA and is necessary for the in vitro assembly process of the 50S ribosomal subunit. It is not involved in the protein synthesizing functions of that subunit. In Arabidopsis thaliana (Mouse-ear cress), this protein is Large ribosomal subunit protein bL20c (rpl20).